A 171-amino-acid chain; its full sequence is MADPTRARKLADRIKVIVADALEKRVKDPRLGFVTITDARVTNDLQHATLFYTVFGSDEEKQGTALALESAKGVLRSEVGKRTGIRLTPTLTFTLDEVPETATQIQDLLKQAAEQDARVAALAAAAQPAGDPDPYKKPVDHTDDWDEDDEDDRDGDDAVDALDAAADVPRL.

Low complexity predominate over residues 120-132; the sequence is AALAAAAQPAGDP. The interval 120–171 is disordered; it reads AALAAAAQPAGDPDPYKKPVDHTDDWDEDDEDDRDGDDAVDALDAAADVPRL. A compositionally biased stretch (basic and acidic residues) spans 133–142; the sequence is DPYKKPVDHT. The segment covering 143–160 has biased composition (acidic residues); that stretch reads DDWDEDDEDDRDGDDAVD. Over residues 161–171 the composition is skewed to low complexity; that stretch reads ALDAAADVPRL.

This sequence belongs to the RbfA family. In terms of assembly, monomer. Binds 30S ribosomal subunits, but not 50S ribosomal subunits or 70S ribosomes.

The protein resides in the cytoplasm. One of several proteins that assist in the late maturation steps of the functional core of the 30S ribosomal subunit. Associates with free 30S ribosomal subunits (but not with 30S subunits that are part of 70S ribosomes or polysomes). Required for efficient processing of 16S rRNA. May interact with the 5'-terminal helix region of 16S rRNA. In Kineococcus radiotolerans (strain ATCC BAA-149 / DSM 14245 / SRS30216), this protein is Ribosome-binding factor A.